Here is an 890-residue protein sequence, read N- to C-terminus: MDSNTAPLGPSCPQPPPAPQPQARSRLNATASLEQERSERPRAPGPQAGPGPGVRDAAAPAEPQAQHTRSRERADGTGPTKGDMEIPFEEVLERAKAGDPKAQTEVGKHYLQLAGDTDEELNSCTAVDWLVLAAKQGRREAVKLLRRCLADRRGITSENEREVRQLSSETDLERAVRKAALVMYWKLNPKKKKQVAVAELLENVGQVNEHDGGAQPGPVPKSLQKQRRMLERLVSSESKNYIALDDFVEITKKYAKGVIPSSLFLQDDEDDDELAGKSPEDLPLRLKVVKYPLHAIMEIKEYLIDMASRAGMHWLSTIIPTHHINALIFFFIVSNLTIDFFAFFIPLVIFYLSFISMVICTLKVFQDSKAWENFRTLTDLLLRFEPNLDVEQAEVNFGWNHLEPYAHFLLSVFFVIFSFPIASKDCIPCSELAVITGFFTVTSYLSLSTHAEPYTRRALATEVTAGLLSLLPSMPLNWPYLKVLGQTFITVPVGHLVVLNVSVPCLLYVYLLYLFFRMAQLRNFKGTYCYLVPYLVCFMWCELSVVILLESTGLGLLRASIGYFLFLFALPILVAGLALVGVLQFARWFTSLELTKIAVTVAVCSVPLLLRWWTKASFSVVGMVKSLTRSSMVKLILVWLTAIVLFCWFYVYRSEGMKVYNSTLTWQQYGALCGPRAWKETNMARTQILCSHLEGHRVTWTGRFKYVRVTDIDNSAESAINMLPFFIGDWMRCLYGEAYPACSPGNTSTAEEELCRLKLLAKHPCHIKKFDRYKFEITVGMPFSSGADGSRSREEDDVTKDIVLRASSEFKSVLLSLRQGSLIEFSTILEGRLGSKWPVFELKAISCLNCMAQLSPTRRHVKIEHDWRSTVHGAVKFAFDFFFFPFLSAA.

Met1 is subject to N-acetylmethionine. The segment at 1 to 86 (MDSNTAPLGP…TGPTKGDMEI (86 aa)) is disordered. Residues 1–321 (MDSNTAPLGP…MHWLSTIIPT (321 aa)) form an interaction with ATP6V1A region. Positions 10–20 (PSCPQPPPAPQ) are enriched in pro residues. Thr30 bears the Phosphothreonine; by FAM20C mark. Ser32 carries the post-translational modification Phosphoserine; by FAM20C. Ser157 carries the post-translational modification Phosphoserine. The next 10 membrane-spanning stretches (helical) occupy residues 314-334 (WLST…FIVS), 340-360 (FFAF…MVIC), 402-422 (LEPY…FPIA), 427-447 (IPCS…YLSL), 465-485 (AGLL…KVLG), 496-516 (LVVL…YLFF), 529-549 (CYLV…VILL), 563-583 (YFLF…VGVL), 589-609 (FTSL…VPLL), and 632-652 (MVKL…FYVY). At 653 to 869 (RSEGMKVYNS…HVKIEHDWRS (217 aa)) the chain is on the lumenal side. N-linked (GlcNAc...) asparagine glycans are attached at residues Asn661 and Asn746. The helical transmembrane segment at 870-890 (TVHGAVKFAFDFFFFPFLSAA) threads the bilayer.

Interacts with ATP6V1A. As to expression, highly expressed in heart followed by brain, placenta, lung and pancreas. Weakly expressed in liver, kidney and skeletal muscle. Also expressed in islet and beta-cell insulinoma cell line.

It localises to the endoplasmic reticulum membrane. The protein resides in the cytoplasmic vesicle. It is found in the secretory vesicle. Its function is as follows. Participates in the regulation of cellular Ca(2+) homeostasis, at least partly, by modulating the filling state of the endoplasmic reticulum Ca(2+) store. Negatively regulates the ER stress response and positively regulates the stability of V-ATPase subunits ATP6V1A and ATP1B1 by preventing their degradation through an unknown proteasome-independent mechanism. This is Wolframin (WFS1) from Homo sapiens (Human).